The chain runs to 398 residues: Acetate kinase (398 aa).

N8 is a Mg(2+) binding site. Position 15 (K15) interacts with ATP. Substrate is bound at residue R89. D146 functions as the Proton donor/acceptor in the catalytic mechanism. ATP contacts are provided by residues 206–210 (HIGNG), 283–285 (DMR), and 331–335 (GMGEN). Position 383 (E383) interacts with Mg(2+).

Belongs to the acetokinase family. Homodimer. It depends on Mg(2+) as a cofactor. Mn(2+) is required as a cofactor.

Its subcellular location is the cytoplasm. The enzyme catalyses acetate + ATP = acetyl phosphate + ADP. The protein operates within metabolic intermediate biosynthesis; acetyl-CoA biosynthesis; acetyl-CoA from acetate: step 1/2. In terms of biological role, catalyzes the formation of acetyl phosphate from acetate and ATP. Can also catalyze the reverse reaction. The sequence is that of Acetate kinase from Streptococcus pyogenes serotype M6 (strain ATCC BAA-946 / MGAS10394).